The following is a 137-amino-acid chain: Large-conductance mechanosensitive channel (137 aa).

The next 2 helical transmembrane spans lie at 10-30 and 76-96; these read FAMR…AAFG and GVFI…FMAI.

The protein belongs to the MscL family. In terms of assembly, homopentamer.

It is found in the cell inner membrane. Functionally, channel that opens in response to stretch forces in the membrane lipid bilayer. May participate in the regulation of osmotic pressure changes within the cell. This chain is Large-conductance mechanosensitive channel, found in Enterobacter sp. (strain 638).